Consider the following 122-residue polypeptide: Large ribosomal subunit protein uL14 (122 aa).

Belongs to the universal ribosomal protein uL14 family. As to quaternary structure, part of the 50S ribosomal subunit. Forms a cluster with proteins L3 and L19. In the 70S ribosome, L14 and L19 interact and together make contacts with the 16S rRNA in bridges B5 and B8.

Binds to 23S rRNA. Forms part of two intersubunit bridges in the 70S ribosome. The chain is Large ribosomal subunit protein uL14 from Herminiimonas arsenicoxydans.